The chain runs to 728 residues: Cytosolic endo-beta-N-acetylglucosaminidase (728 aa).

The 95-residue stretch at 287 to 381 (QNRVFFDACD…NFLLNEDKFW (95 aa)) folds into the BRCT domain.

This sequence belongs to the glycosyl hydrolase 85 family.

The protein localises to the cytoplasm. It localises to the cytosol. The enzyme catalyses an N(4)-(oligosaccharide-(1-&gt;3)-[oligosaccharide-(1-&gt;6)]-beta-D-Man-(1-&gt;4)-beta-D-GlcNAc-(1-&gt;4)-alpha-D-GlcNAc)-L-asparaginyl-[protein] + H2O = an oligosaccharide-(1-&gt;3)-[oligosaccharide-(1-&gt;6)]-beta-D-Man-(1-&gt;4)-D-GlcNAc + N(4)-(N-acetyl-beta-D-glucosaminyl)-L-asparaginyl-[protein]. Its function is as follows. Endoglycosidase that releases N-glycans from glycoproteins by cleaving the beta-1,4-glycosidic bond in the N,N'-diacetylchitobiose core. Involved in the processing of free oligosaccharides in the cytosol. The chain is Cytosolic endo-beta-N-acetylglucosaminidase (ENGASE) from Gallus gallus (Chicken).